Here is a 142-residue protein sequence, read N- to C-terminus: Cytochrome c-type biogenesis protein CcmE (142 aa).

Topologically, residues methionine 1–lysine 2 are cytoplasmic. The chain crosses the membrane as a helical; Signal-anchor for type II membrane protein span at residues glycine 3–glycine 23. The Periplasmic segment spans residues leucine 24–glutamine 142. The heme site is built by histidine 118 and tyrosine 122.

This sequence belongs to the CcmE/CycJ family.

The protein resides in the cell inner membrane. Heme chaperone required for the biogenesis of c-type cytochromes. Transiently binds heme delivered by CcmC and transfers the heme to apo-cytochromes in a process facilitated by CcmF and CcmH. The protein is Cytochrome c-type biogenesis protein CcmE of Thermus thermophilus (strain ATCC BAA-163 / DSM 7039 / HB27).